The following is a 475-amino-acid chain: Bifunctional protein HldE (475 aa).

Positions 1–321 (MADKIDISLY…RALHQITASH (321 aa)) are ribokinase. Residue 197–200 (NLKE) coordinates ATP. Aspartate 266 is a catalytic residue. A cytidylyltransferase region spans residues 346–475 (MTNGCFDILH…TSRLVEKMLN (130 aa)).

It in the N-terminal section; belongs to the carbohydrate kinase PfkB family. This sequence in the C-terminal section; belongs to the cytidylyltransferase family. As to quaternary structure, homodimer.

The enzyme catalyses D-glycero-beta-D-manno-heptose 7-phosphate + ATP = D-glycero-beta-D-manno-heptose 1,7-bisphosphate + ADP + H(+). The catalysed reaction is D-glycero-beta-D-manno-heptose 1-phosphate + ATP + H(+) = ADP-D-glycero-beta-D-manno-heptose + diphosphate. It functions in the pathway nucleotide-sugar biosynthesis; ADP-L-glycero-beta-D-manno-heptose biosynthesis; ADP-L-glycero-beta-D-manno-heptose from D-glycero-beta-D-manno-heptose 7-phosphate: step 1/4. The protein operates within nucleotide-sugar biosynthesis; ADP-L-glycero-beta-D-manno-heptose biosynthesis; ADP-L-glycero-beta-D-manno-heptose from D-glycero-beta-D-manno-heptose 7-phosphate: step 3/4. Its function is as follows. Catalyzes the phosphorylation of D-glycero-D-manno-heptose 7-phosphate at the C-1 position to selectively form D-glycero-beta-D-manno-heptose-1,7-bisphosphate. Catalyzes the ADP transfer from ATP to D-glycero-beta-D-manno-heptose 1-phosphate, yielding ADP-D-glycero-beta-D-manno-heptose. The protein is Bifunctional protein HldE of Coxiella burnetii (strain Dugway 5J108-111).